We begin with the raw amino-acid sequence, 287 residues long: 4-diphosphocytidyl-2-C-methyl-D-erythritol kinase (287 aa).

Lys11 is an active-site residue. 93 to 103 (PFGAGLGGGSS) serves as a coordination point for ATP. Asp135 is a catalytic residue.

This sequence belongs to the GHMP kinase family. IspE subfamily.

It catalyses the reaction 4-CDP-2-C-methyl-D-erythritol + ATP = 4-CDP-2-C-methyl-D-erythritol 2-phosphate + ADP + H(+). Its pathway is isoprenoid biosynthesis; isopentenyl diphosphate biosynthesis via DXP pathway; isopentenyl diphosphate from 1-deoxy-D-xylulose 5-phosphate: step 3/6. Its function is as follows. Catalyzes the phosphorylation of the position 2 hydroxy group of 4-diphosphocytidyl-2C-methyl-D-erythritol. The chain is 4-diphosphocytidyl-2-C-methyl-D-erythritol kinase from Pelodictyon phaeoclathratiforme (strain DSM 5477 / BU-1).